Here is a 672-residue protein sequence, read N- to C-terminus: Segment polarity protein dishevelled homolog mig-5 (672 aa).

The 83-residue stretch at 9-91 folds into the DIX domain; that stretch reads CSQIKVFYYL…GFYEIFLVST (83 aa). 3 disordered regions span residues 97–127, 150–174, and 187–215; these read LPRNSGTMTRPQRTALDKRRRRSADFDATPY, YTSNSEDPYQYDEHTRRTGDDSSLY, and DDDRRRKKQKKERFRRPYVPSTISSATES. Residues 98–108 are compositionally biased toward polar residues; that stretch reads PRNSGTMTRPQ. Over residues 160–169 the composition is skewed to basic and acidic residues; it reads YDEHTRRTGD. Positions 191-202 are enriched in basic residues; it reads RRKKQKKERFRR. Residues 226–294 enclose the PDZ domain; the sequence is EIYLPMKNVP…PQAVRSLREA (69 aa). A DEP domain is found at 427 to 501; the sequence is PDSGLAVKNR…TEKCYYVFGD (75 aa). The interval 604-672 is disordered; the sequence is KNNHRQVPAP…SNSRTRILRT (69 aa). Residues 660–672 show a composition bias toward polar residues; sequence ENSSNSRTRILRT.

The protein belongs to the DSH family.

Its subcellular location is the cytoplasm. The protein resides in the cell cortex. It localises to the cell membrane. It is found in the cell junction. Its function is as follows. Plays a role in the signal transduction pathways mediated by multiple Wnt genes. Functions redundantly with other dishevelled family members throughout development. During embryonic and larval development, controls cell migration and/or cell fate specification of hypodermal cells, hypodermal seam cells, vulval precursor cells and, through distal tip cell migration, somatic gonad precursor cells. In early embryos, regulates the orientation of the mitotic spindle of blastomeres and specifically, along with dsh-2, is required for the correct mitotic spindle orientation of the ABar blastomere division plane. Controls the polarity and the asymmetric localization of downstream components of the wnt/beta-catenin asymmetry pathway, and in particular, controls the asymmetric localization of the wnt receptor lin-17/Frizzled in ectodermal blast B cells. May act redundantly with dsh-2 to regulate the expression and nuclear localization of the beta-catenin homolog wrm-2, but alone seems to be required for the polarity of wrm-2 during the asymmetric cell division of hypodermal seam cells. Also, maintains the polarity and migration of QL neuroblasts in larvae. During the embryonic development of touch receptor neurons, may act redundantly with dsh-1, downstream of wnt signaling ligands and the wnt receptor lin-17/Frizzled, to direct the growth of neurites of touch receptor neurons towards the anterior of the body of the worm and towards the PLM touch receptor neuron and other tail neurons. May play a role in the guidance of posterior D-type motor neuron axons along the anteroposterior axis. The polypeptide is Segment polarity protein dishevelled homolog mig-5 (Caenorhabditis elegans).